A 193-amino-acid chain; its full sequence is Bcl-2-like protein 2 (193 aa).

Residue Ala-2 is modified to N-acetylalanine. Residues 9-29 carry the BH4 motif; the sequence is DTRALVADFVGYKLRQKGYVC. A BH1 motif is present at residues 85–104; the sequence is ELFQGGPNWGRLVAFFVFGA. The BH2 motif lies at 136–151; it reads DWIHSSGGWAEFTALY. A Phosphoserine modification is found at Ala-177.

It belongs to the Bcl-2 family. As to quaternary structure, interacts with HIF3A (via C-terminus domain). Interacts with BOP. In terms of tissue distribution, expressed (at protein level) in a wide range of tissues with highest levels in brain, spinal cord, testis, pancreas, heart, spleen and mammary glands. Moderate levels found in thymus, ovary and small intestine. Not detected in salivary gland, muscle or liver. Also expressed in cell lines of myeloid, fibroblast and epithelial origin. Not detected in most lymphoid cell lines.

The protein localises to the mitochondrion membrane. Promotes cell survival. Blocks dexamethasone-induced apoptosis. Mediates survival of postmitotic Sertoli cells by suppressing death-promoting activity of BAX. The protein is Bcl-2-like protein 2 (BCL2L2) of Homo sapiens (Human).